Reading from the N-terminus, the 1439-residue chain is Mediator of RNA polymerase II transcription subunit 23 (1439 aa).

Residues 282–318 are a coiled coil; it reads SQMLNLQKHQKQRYNALEEQLVNLIVQAMEMTEANDA. The tract at residues 358–625 is interaction with Hsf; sequence HIVLALHEKL…HHVPTHYRVQ (268 aa). Disordered stretches follow at residues 1338–1372 and 1401–1439; these read NDNTSNNAITSQTQSPMQTQHQQQPQQPHQQQQQQ and SVPLGSGGNLQQQQQINQQQQMYMQHMQQHQHMQNMRHN. Composition is skewed to low complexity over residues 1348-1372 and 1411-1439; these read SQTQSPMQTQHQQQPQQPHQQQQQQ and QQQQQINQQQQMYMQHMQQHQHMQNMRHN.

Belongs to the Mediator complex subunit 23 family. Component of the Mediator complex. Interacts with Hsf.

The protein resides in the nucleus. Functionally, component of the Mediator complex, a coactivator involved in the regulated transcription of nearly all RNA polymerase II-dependent genes. Mediator functions as a bridge to convey information from gene-specific regulatory proteins to the basal RNA polymerase II transcription machinery. Mediator is recruited to promoters by direct interactions with regulatory proteins and serves as a scaffold for the assembly of a functional preinitiation complex with RNA polymerase II and the general transcription factors. Required for transcriptional activation in response to heat shock. This Drosophila melanogaster (Fruit fly) protein is Mediator of RNA polymerase II transcription subunit 23 (MED23).